The sequence spans 537 residues: Nedd4 binding protein 3 (537 aa).

Ser172 bears the Phosphoserine mark. Disordered regions lie at residues 173-234 (LDEG…VLSC), 327-359 (RKELRAQQGLAPEPRTSGPPMEADPNARPEEEA), and 422-456 (LQEQAPREEAPGSCETDDCKSRGLLGEAGGNEARE). Residues 178 to 207 (PEPSLSDSSSGGSFGRSPGTGPSPFSSSLG) are compositionally biased toward low complexity. Residues 295–523 (VDRLHEVAQK…LEQELRVLRE (229 aa)) adopt a coiled-coil conformation.

It belongs to the N4BP3 family. Binds NEDD4. Interacts with 14-3-3 proteins. Interacts with MAVS.

The protein resides in the cytoplasmic vesicle. The protein localises to the cell projection. It is found in the axon. It localises to the dendrite. In terms of biological role, plays a positive role in the antiviral innate immune signaling pathway. Mechanistically, interacts with MAVS and functions as a positive regulator to promote 'Lys-63'-linked polyubiquitination of MAVS and thus strengthens the interaction between MAVS and TRAF2. Also plays a role in axon and dendrite arborization during cranial nerve development. May also be important for neural crest migration and early development of other anterior structures including eye, brain and cranial cartilage. The sequence is that of Nedd4 binding protein 3 from Rattus norvegicus (Rat).